Consider the following 433-residue polypeptide: MLDIQLLRKDLDGVAKRLADRGYTLDVAAFSALEAERRAIQTHTEELQARRNSLSKQIGAMKGKGEDTSAVMAEVGGIGDDMKASEAKLGEIQARLSDLMLGMPNVAHESVPVGKDEADNVEARRWGTPRQFDFEVKDHVDVGTPLGLDFETGAKLAGARFTMLRGPIARLHRALAQFMIDTHTQQHGYTETYTPYIVNPEILYGTGQLPKFADDMFRVEKGGAENTVTQYLISTSEISLTNTVRESIVDGAALPIKLTAHSPCFRSEAGSYGRDTRGMIRQHQFDKVEMVQVVAPETSYAALDEMVGHAEAILQKLGLPYRVITLCTGDMGFSAAKTFDLEVWLPAQNTYREISSCSNTEAFQARRMQARFRNAQGKPELVHTLNGSGLAVGRTLVAVLENYQNADGSVTVPEVLRPYMGGMERIDAPAQAS.

235–237 (TSE) contributes to the L-serine binding site. 266-268 (RSE) serves as a coordination point for ATP. Glu289 serves as a coordination point for L-serine. 353 to 356 (EISS) contacts ATP. Ser388 contributes to the L-serine binding site.

The protein belongs to the class-II aminoacyl-tRNA synthetase family. Type-1 seryl-tRNA synthetase subfamily. As to quaternary structure, homodimer. The tRNA molecule binds across the dimer.

Its subcellular location is the cytoplasm. It catalyses the reaction tRNA(Ser) + L-serine + ATP = L-seryl-tRNA(Ser) + AMP + diphosphate + H(+). It carries out the reaction tRNA(Sec) + L-serine + ATP = L-seryl-tRNA(Sec) + AMP + diphosphate + H(+). It participates in aminoacyl-tRNA biosynthesis; selenocysteinyl-tRNA(Sec) biosynthesis; L-seryl-tRNA(Sec) from L-serine and tRNA(Sec): step 1/1. Functionally, catalyzes the attachment of serine to tRNA(Ser). Is also able to aminoacylate tRNA(Sec) with serine, to form the misacylated tRNA L-seryl-tRNA(Sec), which will be further converted into selenocysteinyl-tRNA(Sec). This Burkholderia orbicola (strain MC0-3) protein is Serine--tRNA ligase.